The primary structure comprises 219 residues: 2-hydroxy-3-keto-5-methylthiopentenyl-1-phosphate phosphatase (219 aa).

It belongs to the HAD-like hydrolase superfamily. MtnX family.

The catalysed reaction is 2-hydroxy-5-methylsulfanyl-3-oxopent-1-enyl phosphate + H2O = 1,2-dihydroxy-5-(methylsulfanyl)pent-1-en-3-one + phosphate. Its pathway is amino-acid biosynthesis; L-methionine biosynthesis via salvage pathway; L-methionine from S-methyl-5-thio-alpha-D-ribose 1-phosphate: step 4/6. Its function is as follows. Dephosphorylates 2-hydroxy-3-keto-5-methylthiopentenyl-1-phosphate (HK-MTPenyl-1-P) yielding 1,2-dihydroxy-3-keto-5-methylthiopentene (DHK-MTPene). The chain is 2-hydroxy-3-keto-5-methylthiopentenyl-1-phosphate phosphatase from Bacillus cereus (strain B4264).